A 114-amino-acid polypeptide reads, in one-letter code: Reprimo-like protein (114 aa).

The helical transmembrane segment at 61 to 81 (VVQIAVLCVLSLTVMFGIFFL) threads the bilayer.

The protein belongs to the reprimo family.

The protein resides in the membrane. In Danio rerio (Zebrafish), this protein is Reprimo-like protein (rprml).